Consider the following 213-residue polypeptide: Ribosomal RNA small subunit methyltransferase G (213 aa).

S-adenosyl-L-methionine-binding positions include glycine 72, phenylalanine 77, 125–126 (IE), and arginine 141.

Belongs to the methyltransferase superfamily. RNA methyltransferase RsmG family.

It is found in the cytoplasm. The enzyme catalyses guanosine(527) in 16S rRNA + S-adenosyl-L-methionine = N(7)-methylguanosine(527) in 16S rRNA + S-adenosyl-L-homocysteine. Functionally, specifically methylates the N7 position of guanine in position 527 of 16S rRNA. The chain is Ribosomal RNA small subunit methyltransferase G from Sinorhizobium medicae (strain WSM419) (Ensifer medicae).